Here is a 219-residue protein sequence, read N- to C-terminus: Uracil-DNA glycosylase (219 aa).

The active-site Proton acceptor is the Asp61.

Belongs to the uracil-DNA glycosylase (UDG) superfamily. UNG family.

It is found in the cytoplasm. It catalyses the reaction Hydrolyzes single-stranded DNA or mismatched double-stranded DNA and polynucleotides, releasing free uracil.. Its function is as follows. Excises uracil residues from the DNA which can arise as a result of misincorporation of dUMP residues by DNA polymerase or due to deamination of cytosine. The sequence is that of Uracil-DNA glycosylase from Haemophilus influenzae (strain 86-028NP).